A 154-amino-acid polypeptide reads, in one-letter code: 6,7-dimethyl-8-ribityllumazine synthase (154 aa).

Residues F22, 56–58, and 81–83 each bind 5-amino-6-(D-ribitylamino)uracil; these read AFE and VLI. A (2S)-2-hydroxy-3-oxobutyl phosphate-binding site is contributed by 86–87; the sequence is ET. H89 (proton donor) is an active-site residue. Position 114 (F114) interacts with 5-amino-6-(D-ribitylamino)uracil. Residue R128 coordinates (2S)-2-hydroxy-3-oxobutyl phosphate.

The protein belongs to the DMRL synthase family.

It catalyses the reaction (2S)-2-hydroxy-3-oxobutyl phosphate + 5-amino-6-(D-ribitylamino)uracil = 6,7-dimethyl-8-(1-D-ribityl)lumazine + phosphate + 2 H2O + H(+). It participates in cofactor biosynthesis; riboflavin biosynthesis; riboflavin from 2-hydroxy-3-oxobutyl phosphate and 5-amino-6-(D-ribitylamino)uracil: step 1/2. In terms of biological role, catalyzes the formation of 6,7-dimethyl-8-ribityllumazine by condensation of 5-amino-6-(D-ribitylamino)uracil with 3,4-dihydroxy-2-butanone 4-phosphate. This is the penultimate step in the biosynthesis of riboflavin. The protein is 6,7-dimethyl-8-ribityllumazine synthase of Chlamydia abortus (strain DSM 27085 / S26/3) (Chlamydophila abortus).